We begin with the raw amino-acid sequence, 360 residues long: Phenylalanine--tRNA ligase alpha subunit (360 aa).

Glu260 provides a ligand contact to Mg(2+).

The protein belongs to the class-II aminoacyl-tRNA synthetase family. Phe-tRNA synthetase alpha subunit type 1 subfamily. In terms of assembly, tetramer of two alpha and two beta subunits. Mg(2+) is required as a cofactor.

The protein localises to the cytoplasm. The catalysed reaction is tRNA(Phe) + L-phenylalanine + ATP = L-phenylalanyl-tRNA(Phe) + AMP + diphosphate + H(+). The polypeptide is Phenylalanine--tRNA ligase alpha subunit (Agrobacterium fabrum (strain C58 / ATCC 33970) (Agrobacterium tumefaciens (strain C58))).